The chain runs to 488 residues: MAETERLMPNGGSRETKPLITGHLILGTIVACLGSIQYGYHIAELNAPQEFLSCSRFEAPDENISYDDTWVGQHGLKQCIALTDSQYGAITSIFSIGGLFGSYYAGNWANRYGRKYVSMGASAMCMVSSLLLFFSNSYLQLLFGRFLVGMSCGTAIVITPLFINEIAPVEWRGAMGSMNQVSINLGILLTQTLALKYADSYNWRWLLFSGSVIAVANILAWLKVDESPRWLVSHGFVSEAETALFKLRPGTYQQAKQEIQDWQRSHGHNRDPESSEETHSGPTLWQYVTDPSYKKPRTVILAILSCQQFCGINSIIFYGVKVIGKILPDYSIQVNFAISILNVVVTLAASAIIDHVGRRPLLLASTTVMTAMSLLISVGLTLSVSFLLVTATFVYIAAFAIGLGPIPFLIIGELSYPQDAATAQSFGTVCNWLATFIVGYLFPIGHGLMGGYVFAIFAAIAAMFATYVYKRVPETKGKTTYSEVWAGY.

Topologically, residues 1 to 18 (MAETERLMPNGGSRETKP) are cytoplasmic. The helical transmembrane segment at 19–39 (LITGHLILGTIVACLGSIQYG) threads the bilayer. The Vacuolar portion of the chain corresponds to 40-87 (YHIAELNAPQEFLSCSRFEAPDENISYDDTWVGQHGLKQCIALTDSQY). Asn-63 is a glycosylation site (N-linked (GlcNAc...) asparagine). Residues 88–108 (GAITSIFSIGGLFGSYYAGNW) traverse the membrane as a helical segment. At 109-121 (ANRYGRKYVSMGA) the chain is on the cytoplasmic side. Residues 122 to 142 (SAMCMVSSLLLFFSNSYLQLL) form a helical membrane-spanning segment. The Vacuolar portion of the chain corresponds to 143 to 146 (FGRF). A helical membrane pass occupies residues 147-167 (LVGMSCGTAIVITPLFINEIA). Over 168–178 (PVEWRGAMGSM) the chain is Cytoplasmic. Residues 179–198 (NQVSINLGILLTQTLALKYA) form a helical membrane-spanning segment. Residues 199 to 204 (DSYNWR) lie on the Vacuolar side of the membrane. Residues 205-225 (WLLFSGSVIAVANILAWLKVD) traverse the membrane as a helical segment. The Cytoplasmic segment spans residues 226 to 299 (ESPRWLVSHG…DPSYKKPRTV (74 aa)). Residues 258–279 (EIQDWQRSHGHNRDPESSEETH) show a composition bias toward basic and acidic residues. A disordered region spans residues 258 to 281 (EIQDWQRSHGHNRDPESSEETHSG). A helical membrane pass occupies residues 300–320 (ILAILSCQQFCGINSIIFYGV). The Vacuolar portion of the chain corresponds to 321-322 (KV). A helical membrane pass occupies residues 323 to 337 (IGKILPDYSIQVNFA). The Cytoplasmic segment spans residues 338 to 344 (ISILNVV). The chain crosses the membrane as a helical span at residues 345 to 364 (VTLAASAIIDHVGRRPLLLA). Residues 365 to 390 (STTVMTAMSLLISVGLTLSVSFLLVT) lie on the Vacuolar side of the membrane. A helical membrane pass occupies residues 391 to 411 (ATFVYIAAFAIGLGPIPFLII). Residues 412–419 (GELSYPQD) lie on the Cytoplasmic side of the membrane. A helical membrane pass occupies residues 420-442 (AATAQSFGTVCNWLATFIVGYLF). The Vacuolar segment spans residues 443–446 (PIGH). The chain crosses the membrane as a helical span at residues 447-463 (GLMGGYVFAIFAAIAAM). Over 464 to 488 (FATYVYKRVPETKGKTTYSEVWAGY) the chain is Cytoplasmic.

It belongs to the major facilitator superfamily. Sugar transporter (TC 2.A.1.1) family.

It localises to the vacuole membrane. The sequence is that of Probable metabolite transport protein YBR241C from Saccharomyces cerevisiae (strain ATCC 204508 / S288c) (Baker's yeast).